We begin with the raw amino-acid sequence, 161 residues long: RNA pyrophosphohydrolase (161 aa).

Positions 12-154 (PYRPGVGMMI…KRKLYQAVVK (143 aa)) constitute a Nudix hydrolase domain. Residues 46–67 (GGIVPGETPSIAAMREMLEEIG) carry the Nudix box motif.

Belongs to the Nudix hydrolase family. RppH subfamily. A divalent metal cation serves as cofactor.

Its function is as follows. Accelerates the degradation of transcripts by removing pyrophosphate from the 5'-end of triphosphorylated RNA, leading to a more labile monophosphorylated state that can stimulate subsequent ribonuclease cleavage. This is RNA pyrophosphohydrolase from Rickettsia rickettsii (strain Iowa).